Consider the following 1165-residue polypeptide: Leptin receptor (1165 aa).

Positions 1–21 (MTCPKFSVALLHWEFIYVITA) are cleaved as a signal peptide. Over 22-838 (FDLAYPITPW…TQDGEKHRND (817 aa)) the chain is Extracellular. 5 disulfides stabilise this stretch: cysteine 37–cysteine 90, cysteine 89–cysteine 99, cysteine 131–cysteine 142, cysteine 186–cysteine 196, and cysteine 188–cysteine 193. 5 N-linked (GlcNAc...) asparagine glycosylation sites follow: asparagine 41, asparagine 55, asparagine 72, asparagine 80, and asparagine 98. Asparagine 187 carries N-linked (GlcNAc...) asparagine glycosylation. 4 N-linked (GlcNAc...) asparagine glycosylation sites follow: asparagine 206, asparagine 276, asparagine 347, and asparagine 397. The 94-residue stretch at 239-332 (PPLGLHMEIT…STPFTFTTQD (94 aa)) folds into the Fibronectin type-III 1 domain. 2 disulfide bridges follow: cysteine 352–cysteine 412 and cysteine 413–cysteine 418. N-linked (GlcNAc...) asparagine glycosylation occurs at asparagine 433. 3 disulfide bridges follow: cysteine 436-cysteine 447, cysteine 473-cysteine 528, and cysteine 488-cysteine 498. Residues 467 to 484 (HRSSLYCSDVPSVHPISE) form a leptin-binding region. 3 Fibronectin type-III domains span residues 539–634 (PPSS…TVVT), 642–736 (GPEF…WPMS), and 740–834 (IVQS…DGEK). The WSXWS motif signature appears at 622-626 (WSNWS). 6 N-linked (GlcNAc...) asparagine glycosylation sites follow: asparagine 624, asparagine 659, asparagine 670, asparagine 697, asparagine 728, and asparagine 750. A helical membrane pass occupies residues 839-861 (AGLYVIVPIIISSSILLLGTLLM). At 862–1165 (SHQRMKKLFW…MENKMYDLTV (304 aa)) the chain is on the cytoplasmic side. Positions 870–878 (FWEDVPNPK) match the Box 1 motif motif. The residue at position 881 (serine 881) is a Phosphoserine. The tract at residues 892 to 897 (ETFEHL) is required for JAK2 activation. The tract at residues 897 to 905 (LFIKHTESV) is required for STAT3 phosphorylation. Tyrosine 986 is subject to Phosphotyrosine; by JAK2. Phosphotyrosine is present on tyrosine 1079. A Phosphotyrosine; by JAK2 modification is found at tyrosine 1141.

This sequence belongs to the type I cytokine receptor family. Type 2 subfamily. As to quaternary structure, present as a mixture of monomers and dimers. The phosphorylated receptor binds a number of SH2 domain-containing proteins such as JAK2, STAT3, PTPN11, and SOCS3. Interaction with SOCS3 inhibits JAK/STAT signaling and MAPK cascade. In terms of processing, on ligand binding, phosphorylated on two conserved C-terminal tyrosine residues by JAK2. Tyr-986 is required for complete binding and activation of PTPN11, ERK/FOS activation,for interaction with SOCS3 and SOCS3 mediated inhibition of leptin signaling. Phosphorylation on Tyr-1141 is required for STAT3 binding/activation. Phosphorylation of Tyr-1079 has a more accessory role. In terms of tissue distribution, kidney, liver, spleen, lung, brain, testis, uterus, ovary, corpus luteum, theca and granulosa cells.

The protein resides in the cell membrane. It localises to the basolateral cell membrane. Receptor for hormone LEP/leptin. On ligand binding, mediates LEP central and peripheral effects through the activation of different signaling pathways such as JAK2/STAT3 and MAPK cascade/FOS. In the hypothalamus, LEP acts as an appetite-regulating factor that induces a decrease in food intake and an increase in energy consumption by inducing anorexinogenic factors and suppressing orexigenic neuropeptides, also regulates bone mass and secretion of hypothalamo-pituitary-adrenal hormones. In the periphery, increases basal metabolism, influences reproductive function, regulates pancreatic beta-cell function and insulin secretion, is pro-angiogenic and affects innate and adaptive immunity. Control of energy homeostasis and melanocortin production (stimulation of POMC and full repression of AgRP transcription) is mediated by STAT3 signaling, whereas distinct signals regulate NPY and the control of fertility, growth and glucose homeostasis. Involved in the regulation of counter-regulatory response to hypoglycemia by inhibiting neurons of the parabrachial nucleus. Has a specific effect on T lymphocyte responses, differentially regulating the proliferation of naive and memory T-cells. Leptin increases Th1 and suppresses Th2 cytokine production. The sequence is that of Leptin receptor (LEPR) from Sus scrofa (Pig).